Consider the following 170-residue polypeptide: Putative 4-hydroxy-4-methyl-2-oxoglutarate aldolase (170 aa).

Residues Gly81 to Ile84 and Arg103 contribute to the substrate site. Asp104 serves as a coordination point for a divalent metal cation.

It belongs to the class II aldolase/RraA-like family. In terms of assembly, homotrimer. Requires a divalent metal cation as cofactor.

The catalysed reaction is 4-hydroxy-4-methyl-2-oxoglutarate = 2 pyruvate. The enzyme catalyses oxaloacetate + H(+) = pyruvate + CO2. Catalyzes the aldol cleavage of 4-hydroxy-4-methyl-2-oxoglutarate (HMG) into 2 molecules of pyruvate. Also contains a secondary oxaloacetate (OAA) decarboxylase activity due to the common pyruvate enolate transition state formed following C-C bond cleavage in the retro-aldol and decarboxylation reactions. The polypeptide is Putative 4-hydroxy-4-methyl-2-oxoglutarate aldolase (Corynebacterium efficiens (strain DSM 44549 / YS-314 / AJ 12310 / JCM 11189 / NBRC 100395)).